The primary structure comprises 280 residues: UDP-2,3-diacylglucosamine pyrophosphatase LpxI (280 aa).

Residues alanine 12, 74-75 (NV), glutamine 169, 187-188 (TD), lysine 214, and 226-233 (LPTIGVAT) each bind substrate.

This sequence belongs to the LpxI family. As to quaternary structure, homodimer. It depends on Mg(2+) as a cofactor.

Its subcellular location is the cell inner membrane. The catalysed reaction is UDP-2-N,3-O-bis[(3R)-3-hydroxytetradecanoyl]-alpha-D-glucosamine + H2O = 2-N,3-O-bis[(3R)-3-hydroxytetradecanoyl]-alpha-D-glucosaminyl 1-phosphate + UMP + 2 H(+). The protein operates within glycolipid biosynthesis; lipid IV(A) biosynthesis; lipid IV(A) from (3R)-3-hydroxytetradecanoyl-[acyl-carrier-protein] and UDP-N-acetyl-alpha-D-glucosamine: step 4/6. With respect to regulation, inhibited by high concentrations of Cu(2+) and Zn(2+). Completely inhibited by EDTA in vitro. Functionally, hydrolyzes the pyrophosphate bond of UDP-2,3-diacylglucosamine to form 2,3-diacylglucosamine 1-phosphate (lipid X) and UMP by catalyzing the attack of water at the beta-P atom. Involved in the biosynthesis of lipid A, a phosphorylated glycolipid that anchors the lipopolysaccharide to the outer membrane of the cell. Can functionally complement lpxH deficiency in E.coli. Cannot use CDP-diacylglycerol as substrate. The sequence is that of UDP-2,3-diacylglucosamine pyrophosphatase LpxI from Caulobacter vibrioides (strain ATCC 19089 / CIP 103742 / CB 15) (Caulobacter crescentus).